We begin with the raw amino-acid sequence, 824 residues long: Putative beta-glucuronidase (824 aa).

The chain crosses the membrane as a helical span at residues Tyr26–Tyr43. The active-site Proton donor is Glu430.

The protein belongs to the glycosyl hydrolase 2 family.

It localises to the membrane. It catalyses the reaction a beta-D-glucuronoside + H2O = D-glucuronate + an alcohol. In terms of biological role, glycoside hydrolase that may be involved in ulvan degradation. Ulvan is the main polysaccharide component of the Ulvales (green seaweed) cell wall. It is composed of disaccharide building blocks comprising 3-sulfated rhamnose (Rha3S) linked to D-glucuronic acid (GlcA), L-iduronic acid (IduA), or D-xylose (Xyl). The sequence is that of Putative beta-glucuronidase from Formosa agariphila (strain DSM 15362 / KCTC 12365 / LMG 23005 / KMM 3901 / M-2Alg 35-1).